The sequence spans 308 residues: Probable manganese-dependent inorganic pyrophosphatase (308 aa).

H9, D13, D15, D75, H97, and D149 together coordinate Mn(2+).

Belongs to the PPase class C family. Mn(2+) serves as cofactor.

It is found in the cytoplasm. It carries out the reaction diphosphate + H2O = 2 phosphate + H(+). The chain is Probable manganese-dependent inorganic pyrophosphatase from Listeria monocytogenes serotype 4a (strain HCC23).